Here is a 445-residue protein sequence, read N- to C-terminus: Phosphoglucosamine mutase (445 aa).

Ser99 serves as the catalytic Phosphoserine intermediate. 4 residues coordinate Mg(2+): Ser99, Asp242, Asp244, and Asp246. At Ser99 the chain carries Phosphoserine.

This sequence belongs to the phosphohexose mutase family. It depends on Mg(2+) as a cofactor. Activated by phosphorylation.

It catalyses the reaction alpha-D-glucosamine 1-phosphate = D-glucosamine 6-phosphate. Functionally, catalyzes the conversion of glucosamine-6-phosphate to glucosamine-1-phosphate. The chain is Phosphoglucosamine mutase from Helicobacter pylori (strain Shi470).